The chain runs to 626 residues: ATP-dependent RNA helicase dbp-8 (626 aa).

The span at 1–25 (MPSATAAKAKKANANANLKSKVNKA) shows a compositional bias: low complexity. Residues 1-183 (MPSATAAKAK…ATPALPVPEP (183 aa)) are disordered. The segment covering 40-98 (DESDFGSELDVEDESAASDEEDEDEDEDEHDLEEGVSDEGEGVSDEEEGVSDEDEDEEN) has biased composition (acidic residues). Basic and acidic residues predominate over residues 161–173 (KQAEAPKTEKTEE). The Q motif motif lies at 195–223 (TTFDALNVRPWLVQSLANMAIKRPTGIQK). The Helicase ATP-binding domain maps to 226-406 (IPEILKGRDC…ERPPIPGRAP (181 aa)). Position 239-246 (239-246 (SRTGSGKT)) interacts with ATP. Residues 348-351 (DEAD) carry the DEAD box motif. Residues 438–589 (YLHMFLLTPQ…GVNLETRVIR (152 aa)) form the Helicase C-terminal domain.

Belongs to the DEAD box helicase family. DDX49/DBP8 subfamily.

The protein resides in the nucleus. The protein localises to the nucleolus. It carries out the reaction ATP + H2O = ADP + phosphate + H(+). In terms of biological role, ATP-binding RNA helicase involved in 40S ribosomal subunit biogenesis and is required for the normal formation of 18S rRNAs through pre-rRNA processing at A0, A1 and A2 sites. Required for vegetative growth. The chain is ATP-dependent RNA helicase dbp-8 (dbp-8) from Neurospora crassa (strain ATCC 24698 / 74-OR23-1A / CBS 708.71 / DSM 1257 / FGSC 987).